The chain runs to 227 residues: Octanoyltransferase (227 aa).

The BPL/LPL catalytic domain maps to 35–210 (DKTPDEIWLV…TFLQLVGYSA (176 aa)). Residues 74–81 (RGGQVTYH), 141–143 (SLG), and 154–156 (GLA) each bind substrate. Residue C172 is the Acyl-thioester intermediate of the active site.

This sequence belongs to the LipB family.

It is found in the cytoplasm. It carries out the reaction octanoyl-[ACP] + L-lysyl-[protein] = N(6)-octanoyl-L-lysyl-[protein] + holo-[ACP] + H(+). It participates in protein modification; protein lipoylation via endogenous pathway; protein N(6)-(lipoyl)lysine from octanoyl-[acyl-carrier-protein]: step 1/2. Catalyzes the transfer of endogenously produced octanoic acid from octanoyl-acyl-carrier-protein onto the lipoyl domains of lipoate-dependent enzymes. Lipoyl-ACP can also act as a substrate although octanoyl-ACP is likely to be the physiological substrate. The protein is Octanoyltransferase of Pectobacterium atrosepticum (strain SCRI 1043 / ATCC BAA-672) (Erwinia carotovora subsp. atroseptica).